Consider the following 73-residue polypeptide: Small ribosomal subunit protein eS27 (73 aa).

C28, C31, C47, and C50 together coordinate Zn(2+). Residues 28 to 50 (CVDCGNEQIIFGNASTEVKCHIC) form a C4-type zinc finger.

This sequence belongs to the eukaryotic ribosomal protein eS27 family. In terms of assembly, part of the 30S ribosomal subunit. The cofactor is Zn(2+).

The chain is Small ribosomal subunit protein eS27 from Methanopyrus kandleri (strain AV19 / DSM 6324 / JCM 9639 / NBRC 100938).